The chain runs to 476 residues: UDP-N-acetylmuramoylalanine--D-glutamate ligase (476 aa).

Residue 122–128 (GSNAKST) coordinates ATP.

Belongs to the MurCDEF family.

It is found in the cytoplasm. It carries out the reaction UDP-N-acetyl-alpha-D-muramoyl-L-alanine + D-glutamate + ATP = UDP-N-acetyl-alpha-D-muramoyl-L-alanyl-D-glutamate + ADP + phosphate + H(+). It functions in the pathway cell wall biogenesis; peptidoglycan biosynthesis. Cell wall formation. Catalyzes the addition of glutamate to the nucleotide precursor UDP-N-acetylmuramoyl-L-alanine (UMA). The protein is UDP-N-acetylmuramoylalanine--D-glutamate ligase of Psychrobacter arcticus (strain DSM 17307 / VKM B-2377 / 273-4).